The following is a 197-amino-acid chain: 3-isopropylmalate dehydratase small subunit (197 aa).

This sequence belongs to the LeuD family. LeuD type 1 subfamily. In terms of assembly, heterodimer of LeuC and LeuD.

The catalysed reaction is (2R,3S)-3-isopropylmalate = (2S)-2-isopropylmalate. It participates in amino-acid biosynthesis; L-leucine biosynthesis; L-leucine from 3-methyl-2-oxobutanoate: step 2/4. In terms of biological role, catalyzes the isomerization between 2-isopropylmalate and 3-isopropylmalate, via the formation of 2-isopropylmaleate. The polypeptide is 3-isopropylmalate dehydratase small subunit (Mycobacterium sp. (strain KMS)).